The chain runs to 114 residues: Macrophage migration inhibitory factor homolog (114 aa).

Proline 2 functions as the Proton acceptor; via imino nitrogen in the catalytic mechanism. 2 residues coordinate substrate: lysine 33 and asparagine 98.

The protein belongs to the MIF family.

The protein resides in the secreted. It carries out the reaction L-dopachrome = 5,6-dihydroxyindole-2-carboxylate. The catalysed reaction is 3-phenylpyruvate = enol-phenylpyruvate. In terms of biological role, tautomerization of the methyl ester of L-dopachrome. Inhibits migration of human peripheral blood mononuclear cells. The sequence is that of Macrophage migration inhibitory factor homolog from Trichuris trichiura (Whipworm).